A 748-amino-acid polypeptide reads, in one-letter code: Choline O-acetyltransferase (748 aa).

Basic residues predominate over residues 1–10 (MGLRTAKKRG). Positions 1-89 (MGLRTAKKRG…EWCGAASAEA (89 aa)) are disordered. The span at 17-32 (WKREEGGGTRGRREVR) shows a compositional bias: basic and acidic residues. The span at 40 to 53 (GGRGDPGDVGGPAG) shows a compositional bias: gly residues. Composition is skewed to low complexity over residues 54–65 (NPGCSPHPRAAT) and 73–89 (HTPAHTPEWCGAASAEA). Ser125 is modified (phosphoserine). The active-site Proton acceptor is the His442. Ser473 carries the post-translational modification Phosphoserine. Residues 520-532 (GKTFIKKQKCSPD), Ser558, and Gln659 contribute to the CoA site. Residues 727–748 (PTESKPLATKEKATRPSQGHQP) form a disordered region.

It belongs to the carnitine/choline acetyltransferase family.

It catalyses the reaction choline + acetyl-CoA = acetylcholine + CoA. Functionally, catalyzes the reversible synthesis of acetylcholine (ACh) from acetyl CoA and choline at cholinergic synapses. The chain is Choline O-acetyltransferase (CHAT) from Homo sapiens (Human).